Here is an 808-residue protein sequence, read N- to C-terminus: DNA gyrase subunit B (808 aa).

The region spanning S429–P544 is the Toprim domain. Residues E435, D509, and D511 each coordinate Mg(2+).

Belongs to the type II topoisomerase GyrB family. In terms of assembly, heterotetramer, composed of two GyrA and two GyrB chains. In the heterotetramer, GyrA contains the active site tyrosine that forms a transient covalent intermediate with DNA, while GyrB binds cofactors and catalyzes ATP hydrolysis. Mg(2+) serves as cofactor. Requires Mn(2+) as cofactor. It depends on Ca(2+) as a cofactor.

Its subcellular location is the cytoplasm. It carries out the reaction ATP-dependent breakage, passage and rejoining of double-stranded DNA.. A type II topoisomerase that negatively supercoils closed circular double-stranded (ds) DNA in an ATP-dependent manner to modulate DNA topology and maintain chromosomes in an underwound state. Negative supercoiling favors strand separation, and DNA replication, transcription, recombination and repair, all of which involve strand separation. Also able to catalyze the interconversion of other topological isomers of dsDNA rings, including catenanes and knotted rings. Type II topoisomerases break and join 2 DNA strands simultaneously in an ATP-dependent manner. This is DNA gyrase subunit B from Rickettsia felis (strain ATCC VR-1525 / URRWXCal2) (Rickettsia azadi).